Here is a 288-residue protein sequence, read N- to C-terminus: Nucleotide-binding protein Tola_2941 (288 aa).

Residue 8-15 (GRSGSGKT) coordinates ATP. 56-59 (DVRN) is a binding site for GTP.

This sequence belongs to the RapZ-like family.

Its function is as follows. Displays ATPase and GTPase activities. This Tolumonas auensis (strain DSM 9187 / NBRC 110442 / TA 4) protein is Nucleotide-binding protein Tola_2941.